A 558-amino-acid chain; its full sequence is Acid-sensing ion channel 4-B (558 aa).

Over 1-71 (MPIEFVCKIK…TSERLGFRQT (71 aa)) the chain is Cytoplasmic. A helical membrane pass occupies residues 72–92 (LWGLALLVSLGLFLYQATWSA). The Extracellular segment spans residues 93–433 (ATYLERPHLA…ETIEQKKAYD (341 aa)). 2 disulfide bridges follow: Cys-120–Cys-204 and Cys-182–Cys-189. N-linked (GlcNAc...) asparagine glycosylation is found at Asn-140, Asn-183, Asn-188, Asn-210, and Asn-245. 5 disulfide bridges follow: Cys-298/Cys-373, Cys-317/Cys-369, Cys-321/Cys-367, Cys-330/Cys-351, and Cys-332/Cys-344. Asn-374 carries an N-linked (GlcNAc...) asparagine glycan. Residues 434–454 (IAGLLGDIGGQMGLFIGASIL) form a helical membrane-spanning segment. The short motif at 450–452 (GAS) is the GAS motif; ion selectivity filter element. Over 455-558 (TILEILDYIY…QQAVQQDFAC (104 aa)) the chain is Cytoplasmic.

The protein belongs to the amiloride-sensitive sodium channel (TC 1.A.6) family. ASIC4 subfamily. Homotrimer. Heterotrimer; with other ASIC proteins producing functional channels. As to expression, expressed in central nervous system.

The protein resides in the cell membrane. It catalyses the reaction Na(+)(in) = Na(+)(out). In terms of biological role, does not exhibit measurable stand-alone pH-gated sodium channel activity but may form pH-gated heterotrimeric sodium channels. The polypeptide is Acid-sensing ion channel 4-B (Danio rerio (Zebrafish)).